Consider the following 352-residue polypeptide: Molybdenum import ATP-binding protein ModC (352 aa).

Positions 1 to 229 (MLELNFSQTL…SVMNPWLPKE (229 aa)) constitute an ABC transporter domain. ATP is bound at residue 31–38 (GVSGAGKT). Positions 289–352 (QTSIRNVLRA…AQIKSVSITA (64 aa)) constitute a Mop domain.

Belongs to the ABC transporter superfamily. Molybdate importer (TC 3.A.1.8) family. In terms of assembly, the complex is composed of two ATP-binding proteins (ModC), two transmembrane proteins (ModB) and a solute-binding protein (ModA).

It localises to the cell inner membrane. The catalysed reaction is molybdate(out) + ATP + H2O = molybdate(in) + ADP + phosphate + H(+). Part of the ABC transporter complex ModABC involved in molybdenum import. Responsible for energy coupling to the transport system. The sequence is that of Molybdenum import ATP-binding protein ModC from Escherichia coli (strain K12).